Here is a 111-residue protein sequence, read N- to C-terminus: Ig kappa chain V-III region PC 3741/TEPC 111 (111 aa).

Residues 1 to 23 are framework-1; sequence DIVLTQSPASLAVSLGQRATISC. Cysteine 23 and cysteine 92 form a disulfide bridge. A complementarity-determining-1 region spans residues 24 to 38; sequence RASESVDSYGNSFMH. Positions 39 to 53 are framework-2; sequence WYQQKPGQPPKLLIY. A complementarity-determining-2 region spans residues 54–60; sequence RASNLES. Residues 61 to 92 form a framework-3 region; that stretch reads GIPARFSGSGSRTDFTLTINPVEADDVATYYC. The tract at residues 93 to 101 is complementarity-determining-3; it reads QQSNEDPYT. The framework-4 stretch occupies residues 102–111; sequence FGGGTKLEIK.

This Mus musculus (Mouse) protein is Ig kappa chain V-III region PC 3741/TEPC 111.